The following is a 359-amino-acid chain: NADH-quinone oxidoreductase subunit H (359 aa).

Transmembrane regions (helical) follow at residues Ile-16–Ala-36, Gly-94–Ile-114, Gly-128–Trp-148, Val-167–Leu-187, Gly-205–Ile-225, Phe-261–Leu-281, Ile-296–Val-316, and Leu-331–Met-351.

Belongs to the complex I subunit 1 family. NDH-1 is composed of 14 different subunits. Subunits NuoA, H, J, K, L, M, N constitute the membrane sector of the complex.

Its subcellular location is the cell inner membrane. It catalyses the reaction a quinone + NADH + 5 H(+)(in) = a quinol + NAD(+) + 4 H(+)(out). NDH-1 shuttles electrons from NADH, via FMN and iron-sulfur (Fe-S) centers, to quinones in the respiratory chain. The immediate electron acceptor for the enzyme in this species is believed to be ubiquinone. Couples the redox reaction to proton translocation (for every two electrons transferred, four hydrogen ions are translocated across the cytoplasmic membrane), and thus conserves the redox energy in a proton gradient. This subunit may bind ubiquinone. The polypeptide is NADH-quinone oxidoreductase subunit H (Polaromonas naphthalenivorans (strain CJ2)).